Reading from the N-terminus, the 965-residue chain is PWWP domain-containing protein 4 (965 aa).

The 62-residue stretch at 135–196 (VGDMVWGKVK…PAELIPFEPH (62 aa)) folds into the PWWP domain. Polar residues predominate over residues 437 to 455 (MNFTSSSGNIPGKKSSVSK). Disordered stretches follow at residues 437 to 507 (MNFT…KSSL), 526 to 577 (VVKR…KSSQ), 649 to 708 (SAKT…SLAP), and 905 to 927 (LSSQ…PPLD). 2 stretches are compositionally biased toward basic and acidic residues: residues 456 to 474 (LSRD…RMGE) and 481 to 495 (DQEK…KQDE). Over residues 496–507 (TGTNSRSNKSSL) the composition is skewed to polar residues. The Nuclear localization signal signature appears at 546-553 (KKKEYVSE). Basic and acidic residues predominate over residues 549–563 (EYVSELNRDTPDKRK). Positions 657 to 676 (NEQSKAGRNRISSDSQQDVP) are enriched in polar residues. The span at 691 to 702 (ASDKKTNQDATK) shows a compositional bias: basic and acidic residues. Positions 905–919 (LSSQDSEPKPVNNQV) are enriched in polar residues.

Belongs to the PDP family. Component of the PRC2 (polycomb repressive complex 2) complex which regulates histone methylation on histone H3K27.

It is found in the nucleus. In terms of biological role, may influence gene expression by regulating the function of the PRC2 complex and modulating H3K27me3 level. This is PWWP domain-containing protein 4 from Arabidopsis thaliana (Mouse-ear cress).